A 354-amino-acid polypeptide reads, in one-letter code: Large ribosomal subunit protein uL10 (354 aa).

Composition is skewed to acidic residues over residues 286 to 296 (DEEALPEELQD) and 307 to 345 (AEAD…DGDG). The segment at 286–354 (DEEALPEELQ…GGDALGDMFG (69 aa)) is disordered.

The protein belongs to the universal ribosomal protein uL10 family. As to quaternary structure, part of the 50S ribosomal subunit. Forms part of the ribosomal stalk which helps the ribosome interact with GTP-bound translation factors. Forms a heptameric L10(L12)2(L12)2(L12)2 complex, where L10 forms an elongated spine to which the L12 dimers bind in a sequential fashion.

Functionally, forms part of the ribosomal stalk, playing a central role in the interaction of the ribosome with GTP-bound translation factors. This chain is Large ribosomal subunit protein uL10, found in Natronomonas pharaonis (strain ATCC 35678 / DSM 2160 / CIP 103997 / JCM 8858 / NBRC 14720 / NCIMB 2260 / Gabara) (Halobacterium pharaonis).